A 204-amino-acid polypeptide reads, in one-letter code: Allurin (204 aa).

Residues 1-19 form the signal peptide; the sequence is MDTFNFIICISALFHSTYG. The 103-residue stretch at 36–138 folds into the SCP domain; that stretch reads VDLHNLLRRS…DKMIGHYTQV (103 aa). A helical transmembrane segment spans residues 140 to 161; it reads WAKTYLLGCGLAFCPGNYYPYV.

The protein belongs to the CRISP family. Expressed only in oviduct.

The protein localises to the membrane. The protein resides in the secreted. Functionally, involved in sperm chemoattraction. In Xenopus tropicalis (Western clawed frog), this protein is Allurin (crisp-a).